Reading from the N-terminus, the 640-residue chain is ATP-dependent DNA helicase YoaA (640 aa).

In terms of domain architecture, Helicase ATP-binding spans 16 to 278; that stretch reads ELSQNIKGFR…KDMQQLGTTS (263 aa). 51-58 is a binding site for ATP; that stretch reads AGTGTGKT. C114 contacts [4Fe-4S] cluster. Positions 125–128 match the DEAH box motif; it reads GVLG. Residues C174, C179, and C185 each contribute to the [4Fe-4S] cluster site. Residues 231–234 carry the DEAH box motif; it reads DEAH. Positions 458–634 constitute a Helicase C-terminal domain; the sequence is SLGEILLPVI…SRTRDLNKVI (177 aa).

This sequence belongs to the helicase family. DinG subfamily. Requires [4Fe-4S] cluster as cofactor.

It catalyses the reaction Couples ATP hydrolysis with the unwinding of duplex DNA at the replication fork by translocating in the 5'-3' direction. This creates two antiparallel DNA single strands (ssDNA). The leading ssDNA polymer is the template for DNA polymerase III holoenzyme which synthesizes a continuous strand.. It carries out the reaction ATP + H2O = ADP + phosphate + H(+). Functionally, probably a 5'-3' DNA helicase. In Haemophilus influenzae (strain ATCC 51907 / DSM 11121 / KW20 / Rd), this protein is ATP-dependent DNA helicase YoaA.